The sequence spans 457 residues: Siroheme synthase (457 aa).

Positions 1–204 (MDHLPIFCQL…NDQKAITETT (204 aa)) are precorrin-2 dehydrogenase /sirohydrochlorin ferrochelatase. NAD(+) is bound by residues 22-23 (DV) and 43-44 (LA). Serine 128 bears the Phosphoserine mark. The uroporphyrinogen-III C-methyltransferase stretch occupies residues 216-457 (GEVVLVGAGP…RDKLNWFSNH (242 aa)). S-adenosyl-L-methionine is bound at residue proline 225. The Proton acceptor role is filled by aspartate 248. Lysine 270 acts as the Proton donor in catalysis. Residues 301 to 303 (GGD), isoleucine 306, 331 to 332 (TA), methionine 382, and glycine 411 each bind S-adenosyl-L-methionine.

This sequence in the N-terminal section; belongs to the precorrin-2 dehydrogenase / sirohydrochlorin ferrochelatase family. It in the C-terminal section; belongs to the precorrin methyltransferase family.

The enzyme catalyses uroporphyrinogen III + 2 S-adenosyl-L-methionine = precorrin-2 + 2 S-adenosyl-L-homocysteine + H(+). The catalysed reaction is precorrin-2 + NAD(+) = sirohydrochlorin + NADH + 2 H(+). It carries out the reaction siroheme + 2 H(+) = sirohydrochlorin + Fe(2+). It functions in the pathway cofactor biosynthesis; adenosylcobalamin biosynthesis; precorrin-2 from uroporphyrinogen III: step 1/1. It participates in cofactor biosynthesis; adenosylcobalamin biosynthesis; sirohydrochlorin from precorrin-2: step 1/1. The protein operates within porphyrin-containing compound metabolism; siroheme biosynthesis; precorrin-2 from uroporphyrinogen III: step 1/1. Its pathway is porphyrin-containing compound metabolism; siroheme biosynthesis; siroheme from sirohydrochlorin: step 1/1. It functions in the pathway porphyrin-containing compound metabolism; siroheme biosynthesis; sirohydrochlorin from precorrin-2: step 1/1. Multifunctional enzyme that catalyzes the SAM-dependent methylations of uroporphyrinogen III at position C-2 and C-7 to form precorrin-2 via precorrin-1. Then it catalyzes the NAD-dependent ring dehydrogenation of precorrin-2 to yield sirohydrochlorin. Finally, it catalyzes the ferrochelation of sirohydrochlorin to yield siroheme. This chain is Siroheme synthase, found in Escherichia coli O7:K1 (strain IAI39 / ExPEC).